A 338-amino-acid chain; its full sequence is Ketol-acid reductoisomerase (NADP(+)) (338 aa).

One can recognise a KARI N-terminal Rossmann domain in the interval 1-181 (MKVYYDKDAD…GGTKGGVIET (181 aa)). Residues 24 to 27 (YGSQ), arginine 47, serine 52, and 82 to 85 (DETQ) contribute to the NADP(+) site. The active site involves histidine 107. Position 133 (glycine 133) interacts with NADP(+). The 146-residue stretch at 182-327 (SFREETETDL…AELRAMMPWI (146 aa)) folds into the KARI C-terminal knotted domain. Mg(2+)-binding residues include aspartate 190, glutamate 194, glutamate 226, and glutamate 230. Substrate is bound at residue serine 251.

It belongs to the ketol-acid reductoisomerase family. Requires Mg(2+) as cofactor.

The enzyme catalyses (2R)-2,3-dihydroxy-3-methylbutanoate + NADP(+) = (2S)-2-acetolactate + NADPH + H(+). It carries out the reaction (2R,3R)-2,3-dihydroxy-3-methylpentanoate + NADP(+) = (S)-2-ethyl-2-hydroxy-3-oxobutanoate + NADPH + H(+). It participates in amino-acid biosynthesis; L-isoleucine biosynthesis; L-isoleucine from 2-oxobutanoate: step 2/4. Its pathway is amino-acid biosynthesis; L-valine biosynthesis; L-valine from pyruvate: step 2/4. Its function is as follows. Involved in the biosynthesis of branched-chain amino acids (BCAA). Catalyzes an alkyl-migration followed by a ketol-acid reduction of (S)-2-acetolactate (S2AL) to yield (R)-2,3-dihydroxy-isovalerate. In the isomerase reaction, S2AL is rearranged via a Mg-dependent methyl migration to produce 3-hydroxy-3-methyl-2-ketobutyrate (HMKB). In the reductase reaction, this 2-ketoacid undergoes a metal-dependent reduction by NADPH to yield (R)-2,3-dihydroxy-isovalerate. This Laribacter hongkongensis (strain HLHK9) protein is Ketol-acid reductoisomerase (NADP(+)).